The following is a 337-amino-acid chain: Zinc finger protein 488 (337 aa).

The segment covering M1 to S10 has biased composition (polar residues). 3 disordered regions span residues M1–K32, S55–D83, and S146–A179. The segment at T69 to E184 is important for transcriptional repression activity. 2 consecutive C2H2-type zinc fingers follow at residues N272–H299 and L314–H336. Residues H295–P302 carry the Nuclear localization signal motif.

This sequence belongs to the krueppel C2H2-type zinc-finger protein family. In terms of assembly, interacts with OLIG2.

It localises to the nucleus. Transcriptional repressor. Plays a role in oligodendrocyte differentiation, together with OLIG2. Mediates Notch signaling-activated formation of oligodendrocyte precursors. Promotes differentiation of adult neural stem progenitor cells (NSPCs) into mature oligodendrocytes and contributes to remyelination following nerve injury. This chain is Zinc finger protein 488 (Znf488), found in Mus musculus (Mouse).